Here is a 294-residue protein sequence, read N- to C-terminus: Elongation factor Ts (294 aa).

An involved in Mg(2+) ion dislocation from EF-Tu region spans residues 81–84 (TDFV).

This sequence belongs to the EF-Ts family.

Its subcellular location is the cytoplasm. Functionally, associates with the EF-Tu.GDP complex and induces the exchange of GDP to GTP. It remains bound to the aminoacyl-tRNA.EF-Tu.GTP complex up to the GTP hydrolysis stage on the ribosome. The protein is Elongation factor Ts of Hydrogenovibrio crunogenus (strain DSM 25203 / XCL-2) (Thiomicrospira crunogena).